Here is a 652-residue protein sequence, read N- to C-terminus: Drebrin (652 aa).

Ala-2 carries the N-acetylalanine modification. The ADF-H domain occupies 5–134 (GFAAHRLELL…DPGAIGQRLS (130 aa)). 2 stretches are compositionally biased toward basic and acidic residues: residues 211–236 (MEQE…EEHR) and 288–298 (DNPREFFKQQE). Disordered regions lie at residues 211–350 (MEQE…YITC) and 371–652 (SAAG…GGGL). Over residues 328–340 (SGPPSSSSSSSSP) the composition is skewed to low complexity. Over residues 507-517 (PDTPAGPPVPP) the composition is skewed to pro residues. Acidic residues-rich tracts occupy residues 540–554 (QHEE…EEAT) and 640–652 (PLPE…GGGL).

In terms of tissue distribution, brain neurons.

Its subcellular location is the cytoplasm. It is found in the cell projection. The protein resides in the dendrite. The protein localises to the cell cortex. It localises to the cell junction. Its subcellular location is the growth cone. Actin cytoskeleton-organizing protein that plays a role in the formation of cell projections. Plays a role in dendritic spine morphogenesis and organization, including the localization of the dopamine receptor DRD1 to the dendritic spines. Involved in synaptic plasticity. The polypeptide is Drebrin (DBN1) (Gallus gallus (Chicken)).